Consider the following 193-residue polypeptide: Early light-induced protein 2, chloroplastic (193 aa).

Residues 1–43 (MATASFNMQSVFAAPSGVLTTRNIRNTNQLFFKRIAPVGVRCM) constitute a chloroplast transit peptide. Residues 46 to 80 (GDPIKEDPSVPSTSTSATPPQMPQSPPPPVSKPKV) form a disordered region. Low complexity predominate over residues 54–64 (SVPSTSTSATP). Over residues 65–76 (PQMPQSPPPPVS) the composition is skewed to pro residues. 3 helical membrane-spanning segments follow: residues 102–122 (LAMV…ENVF), 129–149 (GVGW…VPLF), and 173–193 (FAML…GTLV).

The protein belongs to the ELIP/psbS family.

It localises to the plastid. It is found in the chloroplast thylakoid membrane. Probably involved in the integration of pigments into the mature light-harvesting pigment-protein complexes. Light-harvesting chlorophyll (LHC) a/b-binding protein required to ensure a high rate of chlorophyll accumulation during deetiolation in continuous high light. Involved in seed germination. May fulfill a photoprotective functions. Prevents excess accumulation of free chlorophyll by inhibiting the entire chlorophyll biosynthesis pathway (e.g. 5-aminolevulinate synthesis and Mg-protoporphyrin IX chelatase activity), and hence prevent photooxidative stress. The protein is Early light-induced protein 2, chloroplastic of Arabidopsis thaliana (Mouse-ear cress).